The primary structure comprises 363 residues: Carbamoyl phosphate synthase small chain (363 aa).

The interval 1–171 is CPSase; sequence MEDGTLFAGA…PYRIPGPGPR (171 aa). L-glutamine-binding residues include Ser39, Gly219, and Gly221. A Glutamine amidotransferase type-1 domain is found at 171 to 359; the sequence is RVVAVDFGAK…LALVDRSAVS (189 aa). Residue Cys248 is the Nucleophile of the active site. L-glutamine-binding residues include Leu249, Gln252, Asn290, Gly292, and Tyr293. Active-site residues include His332 and Glu334.

It belongs to the CarA family. In terms of assembly, composed of two chains; the small (or glutamine) chain promotes the hydrolysis of glutamine to ammonia, which is used by the large (or ammonia) chain to synthesize carbamoyl phosphate. Tetramer of heterodimers (alpha,beta)4.

It carries out the reaction hydrogencarbonate + L-glutamine + 2 ATP + H2O = carbamoyl phosphate + L-glutamate + 2 ADP + phosphate + 2 H(+). The catalysed reaction is L-glutamine + H2O = L-glutamate + NH4(+). It functions in the pathway amino-acid biosynthesis; L-arginine biosynthesis; carbamoyl phosphate from bicarbonate: step 1/1. The protein operates within pyrimidine metabolism; UMP biosynthesis via de novo pathway; (S)-dihydroorotate from bicarbonate: step 1/3. Functionally, small subunit of the glutamine-dependent carbamoyl phosphate synthetase (CPSase). CPSase catalyzes the formation of carbamoyl phosphate from the ammonia moiety of glutamine, carbonate, and phosphate donated by ATP, constituting the first step of 2 biosynthetic pathways, one leading to arginine and/or urea and the other to pyrimidine nucleotides. The small subunit (glutamine amidotransferase) binds and cleaves glutamine to supply the large subunit with the substrate ammonia. This chain is Carbamoyl phosphate synthase small chain, found in Symbiobacterium thermophilum (strain DSM 24528 / JCM 14929 / IAM 14863 / T).